Here is a 371-residue protein sequence, read N- to C-terminus: Mitogen-activated protein kinase homolog MMK2 (371 aa).

In terms of domain architecture, Protein kinase spans 37-323 (VPPIRSVGRG…VDEALCHPYM (287 aa)). Residues 43 to 51 (VGRGAYGIV) and Lys66 contribute to the ATP site. Asp163 serves as the catalytic Proton acceptor. At Thr195 the chain carries Phosphothreonine. Residues 195–197 (TEY) carry the TXY motif. The residue at position 197 (Tyr197) is a Phosphotyrosine.

It belongs to the protein kinase superfamily. CMGC Ser/Thr protein kinase family. MAP kinase subfamily. It depends on Mg(2+) as a cofactor. In terms of processing, dually phosphorylated on Thr-195 and Tyr-197, which activates the enzyme. Autophosphorylated.

It carries out the reaction L-seryl-[protein] + ATP = O-phospho-L-seryl-[protein] + ADP + H(+). The enzyme catalyses L-threonyl-[protein] + ATP = O-phospho-L-threonyl-[protein] + ADP + H(+). With respect to regulation, activated by tyrosine and threonine phosphorylation. The sequence is that of Mitogen-activated protein kinase homolog MMK2 (MMK2) from Medicago sativa (Alfalfa).